We begin with the raw amino-acid sequence, 208 residues long: 3-demethoxyubiquinol 3-hydroxylase (208 aa).

Positions 57, 87, 90, 139, 171, and 174 each coordinate Fe cation.

It belongs to the COQ7 family. It depends on Fe cation as a cofactor.

The protein resides in the cell membrane. It carries out the reaction a 5-methoxy-2-methyl-3-(all-trans-polyprenyl)benzene-1,4-diol + AH2 + O2 = a 3-demethylubiquinol + A + H2O. It functions in the pathway cofactor biosynthesis; ubiquinone biosynthesis. Functionally, catalyzes the hydroxylation of 2-nonaprenyl-3-methyl-6-methoxy-1,4-benzoquinol during ubiquinone biosynthesis. This Burkholderia ambifaria (strain MC40-6) protein is 3-demethoxyubiquinol 3-hydroxylase.